A 554-amino-acid polypeptide reads, in one-letter code: Outer envelope protein 61 (554 aa).

At 1–525 (MFNGLMDPEM…GMEKAKKAKK (525 aa)) the chain is on the cytoplasmic side. TPR repeat units lie at residues 103–136 (AQML…LKEI) and 180–213 (VKAL…SPED). Disordered stretches follow at residues 245-269 (TEEN…AQGV) and 395-439 (APAS…PSAP). Residues 254-263 (ENKKPSKEAN) show a composition bias toward basic and acidic residues. The segment covering 412–423 (SLGASGSSSGNS) has biased composition (low complexity). Residues 526–546 (WLFGKGGLIFAILMLVLAMVL) traverse the membrane as a helical segment. Topologically, residues 547–554 (HRLGYIGN) are lumenal.

Interacts (via TPR region) with HSP70-1, but not with HSP90-2. Interacts with ERDJ2A and ERDJ2B. In the ER membrane, associates with ERDJ2 in membrane complexes of 140 and 200 kDa and specifically interacts with the HSP70 and HSP90 chaperones via its TPR domain. Ubiquitous. Highest expression in leaves and lowest in roots.

Its subcellular location is the endoplasmic reticulum membrane. The protein localises to the plastid. It localises to the chloroplast outer membrane. In terms of biological role, plays a role in protein import into the endoplasmic reticulum (ER). May function as chaperone docking protein during post-translational protein translocation into the ER. Chaperone receptor mediating Hsp70-dependent protein targeting to chloroplasts. Interacts specifically with some chloroplast precursors, but not with mitochondrial precursors. Able to select precursors for delivery to the chloroplast translocase independently of Hsp70. The polypeptide is Outer envelope protein 61 (OEP61) (Arabidopsis thaliana (Mouse-ear cress)).